Here is a 278-residue protein sequence, read N- to C-terminus: Digeranylgeranylglyceryl phosphate synthase (278 aa).

A run of 7 helical transmembrane segments spans residues 12 to 32 (LKNC…ASYF), 34 to 54 (ISMI…CGFG), 91 to 111 (LLVV…LMAV), 142 to 162 (VFIF…LFLC), 204 to 224 (FLLV…FFGI), 226 to 246 (YLIS…NLVM), and 257 to 277 (SRNI…GSLF).

This sequence belongs to the UbiA prenyltransferase family. DGGGP synthase subfamily. The cofactor is Mg(2+).

The protein localises to the cell membrane. The catalysed reaction is sn-3-O-(geranylgeranyl)glycerol 1-phosphate + (2E,6E,10E)-geranylgeranyl diphosphate = 2,3-bis-O-(geranylgeranyl)-sn-glycerol 1-phosphate + diphosphate. It participates in membrane lipid metabolism; glycerophospholipid metabolism. Functionally, prenyltransferase that catalyzes the transfer of the geranylgeranyl moiety of geranylgeranyl diphosphate (GGPP) to the C2 hydroxyl of (S)-3-O-geranylgeranylglyceryl phosphate (GGGP). This reaction is the second ether-bond-formation step in the biosynthesis of archaeal membrane lipids. The polypeptide is Digeranylgeranylglyceryl phosphate synthase (Methanococcus maripaludis (strain C6 / ATCC BAA-1332)).